The chain runs to 457 residues: Multidrug resistance protein MdtK (457 aa).

12 consecutive transmembrane segments (helical) span residues 11–31, 53–73, 93–113, 127–147, 160–180, 188–208, 239–259, 277–297, 316–336, 357–377, 387–407, and 418–438; these read LLAL…MGFV, IWLP…PVIA, WLVA…GHII, AIGY…FQVL, GMVI…IFIY, LGGV…YLLM, IAIG…FAVV, ALNF…AATI, RTAI…TIVL, LMLL…GSGV, IFFI…YLLA, and PSGF…MMAL.

It belongs to the multi antimicrobial extrusion (MATE) (TC 2.A.66.1) family. MdtK subfamily.

It is found in the cell inner membrane. Its function is as follows. Multidrug efflux pump that functions probably as a Na(+)/drug antiporter. The polypeptide is Multidrug resistance protein MdtK (Edwardsiella ictaluri (strain 93-146)).